Reading from the N-terminus, the 93-residue chain is Protein FptB (93 aa).

A signal peptide spans 1-25 (MPRQSGFGWAWRVPLALAGSLAAAT). The next 2 membrane-spanning stretches (helical) occupy residues 44–64 (LYAG…GGLL) and 71–91 (FAWR…LLAG).

Its subcellular location is the cell membrane. Its function is as follows. May play some role in transport of Fe(3+)-pyochelin. This chain is Protein FptB (fptB), found in Pseudomonas aeruginosa (strain ATCC 15692 / DSM 22644 / CIP 104116 / JCM 14847 / LMG 12228 / 1C / PRS 101 / PAO1).